A 252-amino-acid polypeptide reads, in one-letter code: Aspartate/glutamate leucyltransferase (252 aa).

The protein belongs to the R-transferase family. Bpt subfamily.

Its subcellular location is the cytoplasm. It catalyses the reaction N-terminal L-glutamyl-[protein] + L-leucyl-tRNA(Leu) = N-terminal L-leucyl-L-glutamyl-[protein] + tRNA(Leu) + H(+). The catalysed reaction is N-terminal L-aspartyl-[protein] + L-leucyl-tRNA(Leu) = N-terminal L-leucyl-L-aspartyl-[protein] + tRNA(Leu) + H(+). Functions in the N-end rule pathway of protein degradation where it conjugates Leu from its aminoacyl-tRNA to the N-termini of proteins containing an N-terminal aspartate or glutamate. This Hyphomonas neptunium (strain ATCC 15444) protein is Aspartate/glutamate leucyltransferase.